A 362-amino-acid polypeptide reads, in one-letter code: Cobalt-precorrin-5B C(1)-methyltransferase (362 aa).

It belongs to the CbiD family.

The catalysed reaction is Co-precorrin-5B + S-adenosyl-L-methionine = Co-precorrin-6A + S-adenosyl-L-homocysteine. Its pathway is cofactor biosynthesis; adenosylcobalamin biosynthesis; cob(II)yrinate a,c-diamide from sirohydrochlorin (anaerobic route): step 6/10. In terms of biological role, catalyzes the methylation of C-1 in cobalt-precorrin-5B to form cobalt-precorrin-6A. The chain is Cobalt-precorrin-5B C(1)-methyltransferase from Burkholderia multivorans (strain ATCC 17616 / 249).